A 735-amino-acid polypeptide reads, in one-letter code: MGIQGLLPLLKSIMVPIHIKELEGCIVAVDTYSWLHKGALSCSRELCKGLPTKRHIQYCMHRVNLLRHHGVKPIMVFDGGPLPMKLEQENKRARSRKENLARALEHEANGNSSAAYECYSKAVDISPSIAHELIQVLRQENVDYVVAPYEADAQMAFLAITKQVDAIITEDSDLIPFGCLRIIFKMDKFGHGVEFQASKLPKNKDLSLSGFSSQMLLEMCILSGCDYLQSLPGMGLKRAHALITKFKSYDRVIKHLKYSTVSVPPLYEESFKRALLTFKHQRVYDPNAEDIIHLCDISDNLGEDSDFVGPSMPQDIAKGIALGQLDPFTQLPFQAESVTPKLAVDDISRPKSFKPETVKKKLDLPVQKNLLTKYFCFASVEAKRKFKAPRISPMSLTPTDESPSIPDDNTPDLDALSSQTTNESPVYSLGENPCVSEVAEKRDSPDDDAVERNHKDLHHKYCEREVDRPKSDSLKVIVRSKYFKQKQEDKSLKQSIPCLNDCSVIGQRKAVKTVINMSSASKREESHRAIATSPCLHHDRIYNDHEDAKEASFSAMNEVAERTINTHKINHQINEEEQNPSVEIPSAFSTPENVIPLSSIAIDSCHGVATGKRKLDSDENLHKENLKSKHMRMDETDTALNAETPLETDDVEKFGSNISHIGHYSEIAEKSVERFVSAISSFKYSGTGSRASGLRAPLKDIRNTCPSKGLSLKPDISKFGYASSNRHMVTKSRRM.

Residues 1–99 (MGIQGLLPLL…NKRARSRKEN (99 aa)) are N-domain. Asp30, Asp78, Glu150, Asp152, Asp171, Asp173, and Asp226 together coordinate Mg(2+). The I-domain stretch occupies residues 138–230 (RQENVDYVVA…ILSGCDYLQS (93 aa)). The segment at 391 to 456 (ISPMSLTPTD…DDAVERNHKD (66 aa)) is disordered. A compositionally biased stretch (polar residues) spans 416–425 (LSSQTTNESP). Residues 438-456 (VAEKRDSPDDDAVERNHKD) are compositionally biased toward basic and acidic residues.

This sequence belongs to the XPG/RAD2 endonuclease family. EXO1 subfamily. Requires Mg(2+) as cofactor.

It localises to the nucleus. Putative 5'-&gt;3' double-stranded DNA exonuclease which may also contain a cryptic 3'-&gt;5' double-stranded DNA exonuclease activity. May be involved in DNA mismatch repair (MMR). The chain is Exonuclease 1 (EXO1) from Arabidopsis thaliana (Mouse-ear cress).